The chain runs to 1012 residues: AP-2 complex subunit alpha-1 (1012 aa).

4 HEAT repeats span residues 254–289 (AMRALQYFPTIEDPSTRKALFEVLQRILMGTDVVKN), 354–391 (DIIKKHQSQIITSLKDPDISIRRRALDLLYGMCDVSNA), 393–430 (DIVEELLQYLSTAEFSMREELSLKAAILAEKFAPDLSW), and 525–565 (PTIP…CIDV). The disordered stretch occupies residues 652–678 (STDPESVARSLSHPNGTLSNIDPQTPS). Residues 663 to 675 (SHPNGTLSNIDPQ) are compositionally biased toward polar residues. Residues 742-841 (ALCLKDSGVL…LDFSYKFGAN (100 aa)) enclose the GAE domain.

The protein belongs to the adaptor complexes large subunit family. Adaptor protein complex 2 (AP-2) is a heterotetramer composed of two large adaptins (alpha-type and beta-type subunits), a medium adaptin (mu-type subunit) and a small adaptin (sigma-type subunit). Binds to EPSIN2.

The protein localises to the membrane. It is found in the coated pit. Subunit of the adaptor protein complex 2 (AP-2). Adaptor protein complexes function in protein transport via transport vesicles in different membrane traffic pathways. Adaptor protein complexes are vesicle coat components and appear to be involved in cargo selection and vesicle formation. AP-2 is involved in clathrin-dependent endocytosis in which cargo proteins are incorporated into vesicles surrounded by clathrin (clathrin-coated vesicles, CCVs) which are destined for fusion with the early endosome. The complex binds polyphosphoinositides. The polypeptide is AP-2 complex subunit alpha-1 (ALPHA-ADR) (Arabidopsis thaliana (Mouse-ear cress)).